The chain runs to 424 residues: Arginine biosynthesis bifunctional protein ArgJ (424 aa).

Residues Thr166, Lys192, Thr203, Glu290, Asn419, and Thr424 each contribute to the substrate site. The Nucleophile role is filled by Thr203.

Belongs to the ArgJ family. As to quaternary structure, heterotetramer of two alpha and two beta chains.

It is found in the cytoplasm. The catalysed reaction is N(2)-acetyl-L-ornithine + L-glutamate = N-acetyl-L-glutamate + L-ornithine. The enzyme catalyses L-glutamate + acetyl-CoA = N-acetyl-L-glutamate + CoA + H(+). It participates in amino-acid biosynthesis; L-arginine biosynthesis; L-ornithine and N-acetyl-L-glutamate from L-glutamate and N(2)-acetyl-L-ornithine (cyclic): step 1/1. The protein operates within amino-acid biosynthesis; L-arginine biosynthesis; N(2)-acetyl-L-ornithine from L-glutamate: step 1/4. In terms of biological role, catalyzes two activities which are involved in the cyclic version of arginine biosynthesis: the synthesis of N-acetylglutamate from glutamate and acetyl-CoA as the acetyl donor, and of ornithine by transacetylation between N(2)-acetylornithine and glutamate. The polypeptide is Arginine biosynthesis bifunctional protein ArgJ (Colwellia psychrerythraea (strain 34H / ATCC BAA-681) (Vibrio psychroerythus)).